The chain runs to 176 residues: RNA pyrophosphohydrolase (176 aa).

Residues 6 to 149 enclose the Nudix hydrolase domain; that stretch reads GYRPNVGIVI…KRDVYRRVMK (144 aa). The Nudix box motif lies at 38–59; that stretch reads GGINPGESAEQAMYRELFEEVG.

Belongs to the Nudix hydrolase family. RppH subfamily. A divalent metal cation serves as cofactor.

Accelerates the degradation of transcripts by removing pyrophosphate from the 5'-end of triphosphorylated RNA, leading to a more labile monophosphorylated state that can stimulate subsequent ribonuclease cleavage. This Shigella boydii serotype 18 (strain CDC 3083-94 / BS512) protein is RNA pyrophosphohydrolase.